The following is a 308-amino-acid chain: Glycine-rich protein GRP33 (308 aa).

The 36-residue stretch at 83-118 (DQFPKYNFLGKLLGPGGSTMKQLQDETMTKISILGR) folds into the KH domain. Composition is skewed to gly residues over residues 203 to 220 (GPMG…GGFS) and 273 to 294 (RGAG…GGGK). 2 disordered regions span residues 203-222 (GPMG…FSGP) and 270-308 (SPGR…AAPY).

In terms of processing, the arginines in the Gly-rich domain might be methylated.

The protein is Glycine-rich protein GRP33 of Artemia salina (Brine shrimp).